Reading from the N-terminus, the 151-residue chain is Phosphopantetheine adenylyltransferase (151 aa).

Substrate is bound at residue Thr-9. ATP-binding positions include 9–10 and His-17; that span reads TF. Lys-41, Thr-73, and Arg-87 together coordinate substrate. ATP is bound by residues 88-90, Glu-98, and 122-128; these read GIR and LTSISST.

The protein belongs to the bacterial CoaD family. In terms of assembly, homohexamer. Mg(2+) serves as cofactor.

It localises to the cytoplasm. It carries out the reaction (R)-4'-phosphopantetheine + ATP + H(+) = 3'-dephospho-CoA + diphosphate. It functions in the pathway cofactor biosynthesis; coenzyme A biosynthesis; CoA from (R)-pantothenate: step 4/5. Functionally, reversibly transfers an adenylyl group from ATP to 4'-phosphopantetheine, yielding dephospho-CoA (dPCoA) and pyrophosphate. The protein is Phosphopantetheine adenylyltransferase of Phocaeicola vulgatus (strain ATCC 8482 / DSM 1447 / JCM 5826 / CCUG 4940 / NBRC 14291 / NCTC 11154) (Bacteroides vulgatus).